We begin with the raw amino-acid sequence, 254 residues long: Probable protein S-acyltransferase 15 (254 aa).

The next 2 membrane-spanning stretches (helical) occupy residues 1–21 and 28–48; these read MGFV…GLQS and ALLF…CVLV. The 51-residue stretch at 75-125 folds into the DHHC domain; that stretch reads RKCDKCFAYKPLRTHHCRVCRRCVLKMDHHCLWINNCVGYANYKAFFILVF. The active-site S-palmitoyl cysteine intermediate is the cysteine 105. 2 consecutive transmembrane segments (helical) span residues 119 to 139 and 164 to 184; these read AFFI…VLLV and IFMI…IYLI.

This sequence belongs to the DHHC palmitoyltransferase family.

It localises to the endoplasmic reticulum membrane. The protein resides in the cytoplasmic vesicle membrane. It carries out the reaction L-cysteinyl-[protein] + hexadecanoyl-CoA = S-hexadecanoyl-L-cysteinyl-[protein] + CoA. Functionally, palmitoyl acyltransferase. This is Probable protein S-acyltransferase 15 (PAT15) from Arabidopsis thaliana (Mouse-ear cress).